The following is a 672-amino-acid chain: Acetoacetyl-CoA synthetase (672 aa).

This sequence belongs to the ATP-dependent AMP-binding enzyme family.

The protein localises to the cytoplasm. The protein resides in the cytosol. It carries out the reaction acetoacetate + ATP + CoA = acetoacetyl-CoA + AMP + diphosphate. In terms of biological role, converts acetoacetate to acetoacetyl-CoA in the cytosol. Ketone body-utilizing enzyme, responsible for the synthesis of cholesterol and fatty acids. The protein is Acetoacetyl-CoA synthetase (AACS) of Macaca fascicularis (Crab-eating macaque).